The sequence spans 249 residues: Phosphate import ATP-binding protein PstB 1 (249 aa).

An ABC transporter domain is found at Phe4–Val244. Position 36-43 (Gly36–Ser43) interacts with ATP.

The protein belongs to the ABC transporter superfamily. Phosphate importer (TC 3.A.1.7) family. As to quaternary structure, the complex is composed of two ATP-binding proteins (PstB), two transmembrane proteins (PstC and PstA) and a solute-binding protein (PstS).

The protein resides in the cell inner membrane. The catalysed reaction is phosphate(out) + ATP + H2O = ADP + 2 phosphate(in) + H(+). In terms of biological role, part of the ABC transporter complex PstSACB involved in phosphate import. Responsible for energy coupling to the transport system. The polypeptide is Phosphate import ATP-binding protein PstB 1 (Aliivibrio fischeri (strain ATCC 700601 / ES114) (Vibrio fischeri)).